The primary structure comprises 952 residues: Leucine--tRNA ligase (952 aa).

The 'HIGH' region motif lies at 65–76 (PYPSGAGLHVGH). Residues 727–731 (KMGKS) carry the 'KMSKS' region motif. K730 lines the ATP pocket.

It belongs to the class-I aminoacyl-tRNA synthetase family.

It localises to the cytoplasm. It carries out the reaction tRNA(Leu) + L-leucine + ATP = L-leucyl-tRNA(Leu) + AMP + diphosphate. In Salinispora arenicola (strain CNS-205), this protein is Leucine--tRNA ligase.